The chain runs to 338 residues: MSRAKVGINGFGRIGRLVLRAAFLKNTVDVVSVNDPFIDLEYMVYMIKRDSTHGTFPGEVSTENGKLKVNGKLISVHCERDPANIPWDKDGAEYVVESTGVFTTIDKAQAHIKNNRAKKVIISAPSADAPMFVVGVNENSYEKSMSVVSNASCTTNCLAPLAKVIHDKFEIVEGLMTTVHSFTATQKVVDGPSSKLWRDGRGAMQNIIPASTGAAKAVGKVIPALNGKLTGMAFRVPTPDVSVVDLTCRLGKGASYEEIKAAVKAAASGPLKGILEYTEDEVVSSDFVGSTSSSIFDAKAGISLNNNFVKLVSWYDNEFGYSCRVVDLITHMHKVDHA.

The NAD(+) site is built by Arg13, Ile14, Asp35, Arg80, and Ser123. D-glyceraldehyde 3-phosphate contacts are provided by Ser152, Cys153, Thr154, Thr183, Arg198, Thr212, Gly213, and Arg235. Cys153 acts as the Nucleophile in catalysis. Position 317 (Asn317) interacts with NAD(+).

The protein belongs to the glyceraldehyde-3-phosphate dehydrogenase family. Homotetramer.

The protein localises to the tegument membrane. It catalyses the reaction D-glyceraldehyde 3-phosphate + phosphate + NAD(+) = (2R)-3-phospho-glyceroyl phosphate + NADH + H(+). It participates in carbohydrate degradation; glycolysis; pyruvate from D-glyceraldehyde 3-phosphate: step 1/5. Its function is as follows. This antigen is associated with human resistance to schistosomiasis. This is Glyceraldehyde-3-phosphate dehydrogenase from Schistosoma mansoni (Blood fluke).